The sequence spans 864 residues: Leucine--tRNA ligase (864 aa).

Residues 50 to 60 carry the 'HIGH' region motif; the sequence is PYPSGKIHMGH. The 'KMSKS' region motif lies at 622–626; it reads KMSKS. An ATP-binding site is contributed by K625.

The protein belongs to the class-I aminoacyl-tRNA synthetase family.

The protein localises to the cytoplasm. It carries out the reaction tRNA(Leu) + L-leucine + ATP = L-leucyl-tRNA(Leu) + AMP + diphosphate. In Acidiphilium cryptum (strain JF-5), this protein is Leucine--tRNA ligase.